The chain runs to 272 residues: 4-hydroxy-tetrahydrodipicolinate reductase (272 aa).

Residues 10–15, E36, 100–102, and 124–127 each bind NAD(+); these read GAGGRM, GTT, and SGNM. H157 (proton donor/acceptor) is an active-site residue. Residue H158 coordinates (S)-2,3,4,5-tetrahydrodipicolinate. K161 acts as the Proton donor in catalysis. 167-168 contacts (S)-2,3,4,5-tetrahydrodipicolinate; sequence GT.

The protein belongs to the DapB family.

The protein localises to the cytoplasm. It carries out the reaction (S)-2,3,4,5-tetrahydrodipicolinate + NAD(+) + H2O = (2S,4S)-4-hydroxy-2,3,4,5-tetrahydrodipicolinate + NADH + H(+). The enzyme catalyses (S)-2,3,4,5-tetrahydrodipicolinate + NADP(+) + H2O = (2S,4S)-4-hydroxy-2,3,4,5-tetrahydrodipicolinate + NADPH + H(+). It participates in amino-acid biosynthesis; L-lysine biosynthesis via DAP pathway; (S)-tetrahydrodipicolinate from L-aspartate: step 4/4. In terms of biological role, catalyzes the conversion of 4-hydroxy-tetrahydrodipicolinate (HTPA) to tetrahydrodipicolinate. The chain is 4-hydroxy-tetrahydrodipicolinate reductase from Bradyrhizobium sp. (strain ORS 278).